The sequence spans 215 residues: Adenylate kinase (215 aa).

Residue 10–15 (GAGKGT) participates in ATP binding. Residues 30-60 (STGDMLRAAIIKAGTEMGKQAKSVIDAGQLV) are NMP. Residues threonine 31, arginine 36, 58-60 (QLV), 86-89 (GFPR), and glutamine 93 each bind AMP. The interval 123–160 (GRRAHLPSGRTYHVTFNPSKVEGQDDVTGEPLVIREDD) is LID. Residues arginine 124 and 133–134 (TY) contribute to the ATP site. The AMP site is built by arginine 157 and arginine 168. Lysine 201 is an ATP binding site.

This sequence belongs to the adenylate kinase family. Monomer.

The protein localises to the cytoplasm. The catalysed reaction is AMP + ATP = 2 ADP. The protein operates within purine metabolism; AMP biosynthesis via salvage pathway; AMP from ADP: step 1/1. Its function is as follows. Catalyzes the reversible transfer of the terminal phosphate group between ATP and AMP. Plays an important role in cellular energy homeostasis and in adenine nucleotide metabolism. The polypeptide is Adenylate kinase (Aliivibrio salmonicida (strain LFI1238) (Vibrio salmonicida (strain LFI1238))).